We begin with the raw amino-acid sequence, 246 residues long: 1-(5-phosphoribosyl)-5-[(5-phosphoribosylamino)methylideneamino] imidazole-4-carboxamide isomerase (246 aa).

Aspartate 8 (proton acceptor) is an active-site residue. Aspartate 129 serves as the catalytic Proton donor.

The protein belongs to the HisA/HisF family.

It is found in the cytoplasm. The catalysed reaction is 1-(5-phospho-beta-D-ribosyl)-5-[(5-phospho-beta-D-ribosylamino)methylideneamino]imidazole-4-carboxamide = 5-[(5-phospho-1-deoxy-D-ribulos-1-ylimino)methylamino]-1-(5-phospho-beta-D-ribosyl)imidazole-4-carboxamide. Its pathway is amino-acid biosynthesis; L-histidine biosynthesis; L-histidine from 5-phospho-alpha-D-ribose 1-diphosphate: step 4/9. This Desulforamulus reducens (strain ATCC BAA-1160 / DSM 100696 / MI-1) (Desulfotomaculum reducens) protein is 1-(5-phosphoribosyl)-5-[(5-phosphoribosylamino)methylideneamino] imidazole-4-carboxamide isomerase.